Consider the following 328-residue polypeptide: MIEKIWSGESPLWRLLLPLSWLYGLVSGAIRLCYKLKLKRAWRAPIPVVVVGNLTAGGNGKTPVVVWLVEQLQQRGIRVGVVSRGYGGKAESYPLLLSADTTTAQAGDEPVLIYQRTGAPVAVSPVRSDAVKAILAQHPDVQIIVTDDGLQHYRLARDVEIVVIDGVRRFGNGWWLPAGPMRERAGRLKSVDAVIVNGGVPRSGEIPMHLLPGQAVNLRTGTRCDVAQLEHVVTIAGIGHPPRFFATLKMCGVQPEKCVPLADHQSLNHADVSALVSAGQTLVMTEKDAVKCRAFAEENWWYLPVDAQLSGDELAKLLAQLTSLASGH.

55–62 (TAGGNGKT) contacts ATP.

The protein belongs to the LpxK family.

It catalyses the reaction a lipid A disaccharide + ATP = a lipid IVA + ADP + H(+). Its pathway is glycolipid biosynthesis; lipid IV(A) biosynthesis; lipid IV(A) from (3R)-3-hydroxytetradecanoyl-[acyl-carrier-protein] and UDP-N-acetyl-alpha-D-glucosamine: step 6/6. Functionally, transfers the gamma-phosphate of ATP to the 4'-position of a tetraacyldisaccharide 1-phosphate intermediate (termed DS-1-P) to form tetraacyldisaccharide 1,4'-bis-phosphate (lipid IVA). The sequence is that of Tetraacyldisaccharide 4'-kinase from Escherichia coli O81 (strain ED1a).